Consider the following 577-residue polypeptide: Arginine--tRNA ligase (577 aa).

Positions 122–132 (PNVAKEMHVGH) match the 'HIGH' region motif.

The protein belongs to the class-I aminoacyl-tRNA synthetase family. Monomer.

It localises to the cytoplasm. It catalyses the reaction tRNA(Arg) + L-arginine + ATP = L-arginyl-tRNA(Arg) + AMP + diphosphate. The polypeptide is Arginine--tRNA ligase (Vibrio parahaemolyticus serotype O3:K6 (strain RIMD 2210633)).